Consider the following 317-residue polypeptide: Anamorsin homolog 2 (317 aa).

Residues 1–162 (MAKKVGVLLF…KPSWDSASVF (162 aa)) are N-terminal SAM-like domain. A linker region spans residues 163–229 (QLRKGSSQKG…EDDLLTEEDL (67 aa)). [2Fe-2S] cluster contacts are provided by C240, C247, C250, and C252. Residues 240–252 (CAPTKKACKNCTC) are fe-S binding site A. The [4Fe-4S] cluster site is built by C278, C281, C289, and C292. 2 short sequence motifs (cx2C motif) span residues 278–281 (CGSC) and 289–292 (CAGC). Residues 278–292 (CGSCGLGDAFRCAGC) form a fe-S binding site B region.

It belongs to the anamorsin family. As to quaternary structure, monomer. It depends on [2Fe-2S] cluster as a cofactor. [4Fe-4S] cluster is required as a cofactor.

The protein resides in the cytoplasm. It is found in the mitochondrion intermembrane space. In terms of biological role, component of the cytosolic iron-sulfur (Fe-S) protein assembly (CIA) machinery. Required for the maturation of extramitochondrial Fe-S proteins. Part of an electron transfer chain functioning in an early step of cytosolic Fe-S biogenesis, facilitating the de novo assembly of a [4Fe-4S] cluster on the cytosolic Fe-S scaffold complex. Electrons are transferred from NADPH via a FAD- and FMN-containing diflavin oxidoreductase. Together with the diflavin oxidoreductase, also required for the assembly of the diferric tyrosyl radical cofactor of ribonucleotide reductase (RNR), probably by providing electrons for reduction during radical cofactor maturation in the catalytic small subunit. In Physcomitrium patens (Spreading-leaved earth moss), this protein is Anamorsin homolog 2.